Reading from the N-terminus, the 94-residue chain is Acylphosphatase (94 aa).

Positions 7 to 94 (RLTARITGVV…GEFDDFRIID (88 aa)) constitute an Acylphosphatase-like domain. Residues Arg-22 and Asn-40 contribute to the active site.

It belongs to the acylphosphatase family.

It catalyses the reaction an acyl phosphate + H2O = a carboxylate + phosphate + H(+). The polypeptide is Acylphosphatase (acyP) (Paenarthrobacter aurescens (strain TC1)).